The chain runs to 267 residues: CD82 antigen (267 aa).

Over 1–11 (MGSACIKVTKY) the chain is Cytoplasmic. Residue Cys-5 is the site of S-palmitoyl cysteine attachment. A helical transmembrane segment spans residues 12 to 32 (FLFLFNLIFFILGAVILGFGV). The Extracellular segment spans residues 33–53 (WILADKSSFISVLQTSSSSLR). A helical membrane pass occupies residues 54–72 (MGAYVFIGVGAVTMLMGFL). Over 73–83 (GCIGAVNEVRC) the chain is Cytoplasmic. Residue Cys-74 is the site of S-palmitoyl cysteine attachment. Residues 84-110 (LLGLYFAFLLLILIAQVTAGALFYFNM) traverse the membrane as a helical segment. The Extracellular portion of the chain corresponds to 111 to 228 (GKLKQEMGGI…KVQAWLQENL (118 aa)). Residues Asn-129, Asn-157, and Asn-198 are each glycosylated (N-linked (GlcNAc...) asparagine). A helical membrane pass occupies residues 229–250 (GIILGVGVGVAIIELLGMVLSI). The Cytoplasmic portion of the chain corresponds to 251-267 (CLCRHVHSEDYSKVPKY).

This sequence belongs to the tetraspanin (TM4SF) family. In terms of assembly, forms homooligomers. Interacts directly with IGSF8. Interacts with EGFR. Interacts with VEGFA and PDGFB. Interacts with ITGA4. Interacts with ITGA6; this interaction reduces ITGA6 cell surface expression. Interacts with ITGB1. Interacts with TLR4; this interaction inhibits TLR4-mediated signaling pathway. Interacts with TLR9. Interacts with PLAUR. In terms of processing, palmitoylated. Palmitoylation contributes to oligomerization and surface expression. In terms of tissue distribution, lymphoid specific.

Its subcellular location is the cell membrane. The protein localises to the cytoplasmic vesicle. It localises to the phagosome. Structural component of specialized membrane microdomains known as tetraspanin-enriched microdomains (TERMs), which act as platforms for receptor clustering and signaling. Participates thereby in diverse biological functions such as cell signal transduction, adhesion, migration and protein trafficking. Acts as a attenuator of EGF signaling, facilitating ligand-induced endocytosis of the receptor and its subsequent desensitization. Mechanistically, modulates ligand-induced ubiquitination and trafficking of EGFR via E3 ligase CBL phosphorylation by PKC. Increases cell-matrix adhesion by regulating the membrane organization of integrin alpha4/ITA4. Modulates adhesion and suppresses cell migration through other integrins such as the alpha6/ITGA6 and beta1/ITGB1. Decreases cell-associated plasminogen activation by interfering with the interaction between urokinase-type plasminogen activator/PLAU and its receptor PLAUR. Associates with CD4 or CD8 and delivers costimulatory signals for the TCR/CD3 pathway. Plays a role in TLR9 trafficking to acidified CpG-containing compartments by controlling interaction between TLR9 and VAMP3 and subsequent myddosome assembly. Inhibits LPS-induced inflammatory response by preventing binding of LPS to TLR4 on the cell surface. Plays a role in the activation of macrophages into anti-inflammatory phenotypes. Independently of Toll-like receptor (TLR) signaling, is recruited to pathogen-containing phagosomes prior to fusion with lysosomes and thereby participates in antigen presentation. Also acts to control angiogenesis and switch angiogenic milieu to quiescent state by binding and sequestering VEGFA and PDGFB to inhibit the signaling they trigger via their respective cell surface receptor. The protein is CD82 antigen (CD82) of Homo sapiens (Human).